We begin with the raw amino-acid sequence, 596 residues long: Elongation factor 4 (596 aa).

The 182-residue stretch at Lys2–Val183 folds into the tr-type G domain. Residues Asp14–Thr19 and Asn130–Asp133 each bind GTP.

The protein belongs to the TRAFAC class translation factor GTPase superfamily. Classic translation factor GTPase family. LepA subfamily.

Its subcellular location is the cell inner membrane. The catalysed reaction is GTP + H2O = GDP + phosphate + H(+). In terms of biological role, required for accurate and efficient protein synthesis under certain stress conditions. May act as a fidelity factor of the translation reaction, by catalyzing a one-codon backward translocation of tRNAs on improperly translocated ribosomes. Back-translocation proceeds from a post-translocation (POST) complex to a pre-translocation (PRE) complex, thus giving elongation factor G a second chance to translocate the tRNAs correctly. Binds to ribosomes in a GTP-dependent manner. This chain is Elongation factor 4, found in Sulfurimonas denitrificans (strain ATCC 33889 / DSM 1251) (Thiomicrospira denitrificans (strain ATCC 33889 / DSM 1251)).